Here is a 522-residue protein sequence, read N- to C-terminus: Ribonuclease Y (522 aa).

A helical transmembrane segment spans residues 2-22; that stretch reads WVEILVGSSAAIISGAAGYLL. Residues 212-278 enclose the KH domain; the sequence is LINTVSIPSE…TKVIELLVED (67 aa). One can recognise an HD domain in the interval 338–431; it reads ALGHSLEVAH…VCAADTLSAA (94 aa).

This sequence belongs to the RNase Y family.

Its subcellular location is the cell membrane. In terms of biological role, endoribonuclease that initiates mRNA decay. This Nitratiruptor sp. (strain SB155-2) protein is Ribonuclease Y.